A 329-amino-acid chain; its full sequence is Beta-ketoacyl-[acyl-carrier-protein] synthase III (329 aa).

Residues Cys-123 and His-256 contribute to the active site. Positions Gln-257 to Arg-261 are ACP-binding. Asn-286 is a catalytic residue.

The protein belongs to the thiolase-like superfamily. FabH family. Homodimer.

Its subcellular location is the cytoplasm. The enzyme catalyses malonyl-[ACP] + acetyl-CoA + H(+) = 3-oxobutanoyl-[ACP] + CO2 + CoA. Its pathway is lipid metabolism; fatty acid biosynthesis. Its function is as follows. Catalyzes the condensation reaction of fatty acid synthesis by the addition to an acyl acceptor of two carbons from malonyl-ACP. Catalyzes the first condensation reaction which initiates fatty acid synthesis and may therefore play a role in governing the total rate of fatty acid production. Possesses both acetoacetyl-ACP synthase and acetyl transacylase activities. Its substrate specificity determines the biosynthesis of branched-chain and/or straight-chain of fatty acids. This is Beta-ketoacyl-[acyl-carrier-protein] synthase III from Burkholderia thailandensis (strain ATCC 700388 / DSM 13276 / CCUG 48851 / CIP 106301 / E264).